Reading from the N-terminus, the 412-residue chain is N-carbamoyl-L-amino-acid amidohydrolase (412 aa).

His-82, Asp-93, Glu-128, and His-193 together coordinate a divalent metal cation. An N-carbamoyl-L-alpha-amino acid is bound by residues Gln-196, His-229, Asn-278, Arg-291, and Gly-360. The tract at residues 212–330 (SIVGVRALRV…DVDEFFNLSP (119 aa)) is involved in dimerization. His-385 contacts a divalent metal cation.

It belongs to the peptidase M20 family. In terms of assembly, homodimer. Requires Mn(2+) as cofactor. Ni(2+) serves as cofactor. The cofactor is Co(2+). It depends on Fe(2+) as a cofactor.

It catalyses the reaction an N-carbamoyl-L-alpha-amino acid + H2O + 2 H(+) = an L-alpha-amino acid + NH4(+) + CO2. It carries out the reaction N-carbamoyl-L-tryptophan + H2O + 2 H(+) = L-tryptophan + NH4(+) + CO2. The enzyme catalyses N-carbamoyl-L-tyrosine + H2O + 2 H(+) = L-tyrosine + NH4(+) + CO2. The catalysed reaction is N-carbamoyl-L-phenylalanine + H2O + 2 H(+) = L-phenylalanine + NH4(+) + CO2. Catalyzes the hydrolysis of aliphatic N-carbamoyl-L-alpha-amino acids to free L-alpha-amino acids. Is strictly L-specific since it is inactive toward N-carbamoyl-D-alpha-amino acids. Shows a preference for aromatic N-carbamoyl-L-alpha-amino acids, such as N-carbamoyl-L-tryptophan and N-carbamoyl-L-tyrosine and, to a lesser extent, N-carbamoyl-L-phenylalanine and the non-natural amino acid N-carbamoyl-L-thienylalanine. Carbamoyl derivatives of beta-alanine and charged aliphatic amino acids are not accepted as substrates. The protein is N-carbamoyl-L-amino-acid amidohydrolase of Paenarthrobacter aurescens (Arthrobacter aurescens).